The sequence spans 104 residues: NADH-quinone oxidoreductase subunit K (104 aa).

The next 3 membrane-spanning stretches (helical) occupy residues 4–24 (VPASAYLTLAIILFCIGLFGA), 31–51 (VIVLVCIELMLNAANLNLVAF), and 67–87 (LFTMAVAAAEAALGLAILIAL).

Belongs to the complex I subunit 4L family. In terms of assembly, NDH-1 is composed of 14 different subunits. Subunits NuoA, H, J, K, L, M, N constitute the membrane sector of the complex.

It is found in the cell membrane. It carries out the reaction a quinone + NADH + 5 H(+)(in) = a quinol + NAD(+) + 4 H(+)(out). Its function is as follows. NDH-1 shuttles electrons from NADH, via FMN and iron-sulfur (Fe-S) centers, to quinones in the respiratory chain. The immediate electron acceptor for the enzyme in this species is believed to be a menaquinone. Couples the redox reaction to proton translocation (for every two electrons transferred, four hydrogen ions are translocated across the cytoplasmic membrane), and thus conserves the redox energy in a proton gradient. This chain is NADH-quinone oxidoreductase subunit K, found in Bacillus cereus (strain ATCC 14579 / DSM 31 / CCUG 7414 / JCM 2152 / NBRC 15305 / NCIMB 9373 / NCTC 2599 / NRRL B-3711).